Reading from the N-terminus, the 325-residue chain is Putative gluconeogenesis factor (325 aa).

The protein belongs to the gluconeogenesis factor family.

It localises to the cytoplasm. Required for morphogenesis under gluconeogenic growth conditions. The sequence is that of Putative gluconeogenesis factor from Streptococcus pneumoniae serotype 4 (strain ATCC BAA-334 / TIGR4).